Consider the following 547-residue polypeptide: CTP synthase (547 aa).

The amidoligase domain stretch occupies residues 1 to 265; sequence MTRYVFITGG…DEIVLRKLHI (265 aa). Ser-13 contributes to the CTP binding site. Ser-13 provides a ligand contact to UTP. ATP contacts are provided by residues 14–19 and Asp-71; that span reads SLGKGI. 2 residues coordinate Mg(2+): Asp-71 and Glu-139. Residues 146–148, 186–191, and Lys-222 contribute to the CTP site; these read DIE and KTKPTQ. Residues 186–191 and Lys-222 each bind UTP; that span reads KTKPTQ. The Glutamine amidotransferase type-1 domain maps to 290–541; it reads TVGMVGKYVD…IRAARAQHEK (252 aa). Gly-351 is an L-glutamine binding site. The active-site Nucleophile; for glutamine hydrolysis is Cys-378. L-glutamine is bound by residues 379 to 382, Glu-402, and Arg-469; that span reads LGMQ. Catalysis depends on residues His-514 and Glu-516.

Belongs to the CTP synthase family. As to quaternary structure, homotetramer.

The enzyme catalyses UTP + L-glutamine + ATP + H2O = CTP + L-glutamate + ADP + phosphate + 2 H(+). The catalysed reaction is L-glutamine + H2O = L-glutamate + NH4(+). It catalyses the reaction UTP + NH4(+) + ATP = CTP + ADP + phosphate + 2 H(+). It functions in the pathway pyrimidine metabolism; CTP biosynthesis via de novo pathway; CTP from UDP: step 2/2. Allosterically activated by GTP, when glutamine is the substrate; GTP has no effect on the reaction when ammonia is the substrate. The allosteric effector GTP functions by stabilizing the protein conformation that binds the tetrahedral intermediate(s) formed during glutamine hydrolysis. Inhibited by the product CTP, via allosteric rather than competitive inhibition. In terms of biological role, catalyzes the ATP-dependent amination of UTP to CTP with either L-glutamine or ammonia as the source of nitrogen. Regulates intracellular CTP levels through interactions with the four ribonucleotide triphosphates. This chain is CTP synthase, found in Thioalkalivibrio sulfidiphilus (strain HL-EbGR7).